Reading from the N-terminus, the 55-residue chain is Protein SOX-19 (55 aa).

The segment at residues 1 to 55 is a DNA-binding region (HMG box); it reads MVWSQIERRKIMEQWPDMHNAEISKRLGKRWKLLPDYEKIPFIKEAERLRLKHMA.

It is found in the nucleus. This is Protein SOX-19 (Sox19) from Mus musculus (Mouse).